The chain runs to 358 residues: Phospho-N-acetylmuramoyl-pentapeptide-transferase (358 aa).

Helical transmembrane passes span 3–23, 54–74, 84–104, 114–134, 156–176, 187–207, 231–251, 255–275, 283–303, and 330–350; these read QILFAAAIALTVSILLTPALI, GVAILIGMWAGYLGSHLIGIA, ALLVLGLATALGAVGFIDDFI, LTAAGKYLGQLTAAIVFGVLA, ITTVSMGVIVFLAFVSLVVVA, LDGLAAGSMSLVLGGYVIITF, LALVCAAGTAACIGFLWWNAA, IFMGDTGSLALGGLLAGLSIT, VVIGALFVAEAASVVLQVAVF, and VIIRFWLLAAMASAFGLGLFY.

It belongs to the glycosyltransferase 4 family. MraY subfamily. The cofactor is Mg(2+).

It is found in the cell membrane. It catalyses the reaction UDP-N-acetyl-alpha-D-muramoyl-L-alanyl-gamma-D-glutamyl-meso-2,6-diaminopimeloyl-D-alanyl-D-alanine + di-trans,octa-cis-undecaprenyl phosphate = di-trans,octa-cis-undecaprenyl diphospho-N-acetyl-alpha-D-muramoyl-L-alanyl-D-glutamyl-meso-2,6-diaminopimeloyl-D-alanyl-D-alanine + UMP. It functions in the pathway cell wall biogenesis; peptidoglycan biosynthesis. In terms of biological role, catalyzes the initial step of the lipid cycle reactions in the biosynthesis of the cell wall peptidoglycan: transfers peptidoglycan precursor phospho-MurNAc-pentapeptide from UDP-MurNAc-pentapeptide onto the lipid carrier undecaprenyl phosphate, yielding undecaprenyl-pyrophosphoryl-MurNAc-pentapeptide, known as lipid I. This chain is Phospho-N-acetylmuramoyl-pentapeptide-transferase, found in Nocardia farcinica (strain IFM 10152).